Reading from the N-terminus, the 316-residue chain is Thymidylate synthase (316 aa).

Residues Arg-23 and 178 to 179 (RR) each bind dUMP. Cys-198 (nucleophile) is an active-site residue. DUMP-binding positions include 218 to 221 (RSGD), Asn-229, and 259 to 261 (HIY). Asp-221 contributes to the (6R)-5,10-methylene-5,6,7,8-tetrahydrofolate binding site. (6R)-5,10-methylene-5,6,7,8-tetrahydrofolate is bound at residue Ala-315.

This sequence belongs to the thymidylate synthase family. Bacterial-type ThyA subfamily. As to quaternary structure, homodimer.

The protein localises to the cytoplasm. The enzyme catalyses dUMP + (6R)-5,10-methylene-5,6,7,8-tetrahydrofolate = 7,8-dihydrofolate + dTMP. It participates in pyrimidine metabolism; dTTP biosynthesis. Catalyzes the reductive methylation of 2'-deoxyuridine-5'-monophosphate (dUMP) to 2'-deoxythymidine-5'-monophosphate (dTMP) while utilizing 5,10-methylenetetrahydrofolate (mTHF) as the methyl donor and reductant in the reaction, yielding dihydrofolate (DHF) as a by-product. This enzymatic reaction provides an intracellular de novo source of dTMP, an essential precursor for DNA biosynthesis. In Lactiplantibacillus plantarum (strain ATCC BAA-793 / NCIMB 8826 / WCFS1) (Lactobacillus plantarum), this protein is Thymidylate synthase.